The sequence spans 198 residues: Glycerol-3-phosphate acyltransferase (198 aa).

Transmembrane regions (helical) follow at residues 1–21, 52–72, 81–101, 115–135, and 153–173; these read MILI…IPAA, GPAL…VGLA, WTAL…FLGF, LALD…CIWL, and LAAA…LAAL.

The protein belongs to the PlsY family. Probably interacts with PlsX.

The protein localises to the cell membrane. It catalyses the reaction an acyl phosphate + sn-glycerol 3-phosphate = a 1-acyl-sn-glycero-3-phosphate + phosphate. The protein operates within lipid metabolism; phospholipid metabolism. Its function is as follows. Catalyzes the transfer of an acyl group from acyl-phosphate (acyl-PO(4)) to glycerol-3-phosphate (G3P) to form lysophosphatidic acid (LPA). This enzyme utilizes acyl-phosphate as fatty acyl donor, but not acyl-CoA or acyl-ACP. The chain is Glycerol-3-phosphate acyltransferase from Deinococcus geothermalis (strain DSM 11300 / CIP 105573 / AG-3a).